Consider the following 332-residue polypeptide: D-alanine--D-alanine ligase (332 aa).

In terms of domain architecture, ATP-grasp spans 124–329 (KMWFSALNIP…FPDYLLSNIN (206 aa)). 154–209 (ALVNWGSIFVKAASQGSSVGCYRIDNQEDVASTLAQAFTYSDYVIVEKTISARELE) contributes to the ATP binding site. Residues D283, E296, and N298 each contribute to the Mg(2+) site.

It belongs to the D-alanine--D-alanine ligase family. Requires Mg(2+) as cofactor. Mn(2+) is required as a cofactor.

It is found in the cytoplasm. It carries out the reaction 2 D-alanine + ATP = D-alanyl-D-alanine + ADP + phosphate + H(+). The protein operates within cell wall biogenesis; peptidoglycan biosynthesis. Functionally, cell wall formation. This chain is D-alanine--D-alanine ligase, found in Shewanella piezotolerans (strain WP3 / JCM 13877).